The sequence spans 205 residues: MDGDSSTTDASQLGIAGDYIGGSHYVIQPHDDTEDSMNDHEDTNGSKESFREQDIYLPIANVARIMKNAIPQTGKIAKDAKECVQECVSEFISFITSEASERCHQEKRKTINGEDILFAMSTLGFDSYVEPLKLYLQKFREAMKGEKGIGGTVTTGDGLSEELTEEAFTNQLPAGLITTDGQQQNVMVYTTSYQQISGVQQIQFS.

Positions 1 to 50 (MDGDSSTTDASQLGIAGDYIGGSHYVIQPHDDTEDSMNDHEDTNGSKESF) are a domain. Residues 24–50 (HYVIQPHDDTEDSMNDHEDTNGSKESF) form a disordered region. Basic and acidic residues predominate over residues 37–50 (MNDHEDTNGSKESF). Residues 51-140 (REQDIYLPIA…PLKLYLQKFR (90 aa)) form a b domain region. A DNA-binding region spans residues 57–63 (LPIANVA). The segment at 84-95 (VQECVSEFISFI) is subunit association domain (SAD). Positions 141–201 (EAMKGEKGIG…SYQQISGVQQ (61 aa)) are c domain.

It belongs to the NFYB/HAP3 subunit family. As to quaternary structure, heterotrimeric transcription factor composed of three components, NF-YA, NF-YB and NF-YC. NF-YB and NF-YC must interact and dimerize for NF-YA association and DNA binding.

Its subcellular location is the nucleus. Its function is as follows. Component of the sequence-specific heterotrimeric transcription factor (NF-Y) which specifically recognizes a 5'-CCAAT-3' box motif found in the promoters of its target genes. NF-Y can function as both an activator and a repressor, depending on its interacting cofactors. The sequence is that of Nuclear transcription factor Y subunit beta (NFYB) from Gallus gallus (Chicken).